Consider the following 118-residue polypeptide: Small ribosomal subunit protein uS17 (118 aa).

It belongs to the universal ribosomal protein uS17 family. As to quaternary structure, part of the 30S ribosomal subunit.

Its function is as follows. One of the primary rRNA binding proteins, it binds specifically to the 5'-end of 16S ribosomal RNA. The chain is Small ribosomal subunit protein uS17 from Methanopyrus kandleri (strain AV19 / DSM 6324 / JCM 9639 / NBRC 100938).